Reading from the N-terminus, the 267-residue chain is Thyroxine 5-deiodinase (267 aa).

Topologically, residues 1-15 (MHDSGGVQMARALKH) are cytoplasmic. The helical; Signal-anchor for type II membrane protein transmembrane segment at 16 to 36 (AALCLMLLPRFLLAAVMLWLL) threads the bilayer. Residues 37 to 267 (DFLCIRKKVL…VNSQTAVLHV (231 aa)) lie on the Extracellular side of the membrane. Selenocysteine 131 is a catalytic residue. Selenocysteine 131 is a non-standard amino acid (selenocysteine).

Belongs to the iodothyronine deiodinase family. In terms of assembly, monomer. Homodimer. May undergo minor heretodimerization with DIO1 and DIO2.

It is found in the cell membrane. The protein resides in the endosome membrane. The catalysed reaction is 3,3',5'-triiodo-L-thyronine + iodide + A + H(+) = L-thyroxine + AH2. It catalyses the reaction 3,3'-diiodo-L-thyronine + iodide + A + H(+) = 3,3',5-triiodo-L-thyronine + AH2. The enzyme catalyses 3-iodo-L-thyronine + iodide + A + H(+) = 3,5-diiodo-L-thyronine + AH2. It carries out the reaction L-thyronine + iodide + A + H(+) = 3-iodo-L-thyronine + AH2. The catalysed reaction is 3',5'-diiodo-L-thyronine + iodide + A + H(+) = 3,3',5'-triiodo-L-thyronine + AH2. It catalyses the reaction 3'-iodo-L-thyronine + iodide + A + H(+) = 3,3'-diiodo-L-thyronine + AH2. The enzyme catalyses 3,3',5'-triiodothyronamine + iodide + A + H(+) = 3,3',5,5'-tetraiodothyronamine + AH2. It carries out the reaction 3',5'-diiodothyronamine + iodide + A + H(+) = 3,3',5'-triiodothyronamine + AH2. The catalysed reaction is 3,3'-diiodothyronamine + iodide + A + H(+) = 3,3',5-triiodothyronamine + AH2. It catalyses the reaction 3-iodothyronamine + iodide + A + H(+) = 3,5-diiodothyronamine + AH2. The enzyme catalyses 3'-iodothyronamine + iodide + A + H(+) = 3,3'-diiodothyronamine + AH2. It carries out the reaction thyronamine + iodide + A + H(+) = 3-iodothyronamine + AH2. Plays a crucial role in the metabolism of thyroid hormones (TH) and has specific roles in TH activation and inactivation by deiodination. Catalyzes the deiodination of L-thyroxine (T4) to 3,3',5'-triiodothyronine (rT3), 3,5,3'-triiodothyronine (T3) to 3,3'-diiodothyronine (3,3'-T2), 3,5-diiodothyronine (3,5-T2) to 3-monoiodothyronine (3-T1), rT3 to 3',5'-diiodothyronine (3',5'-T2) and 3,3'-T2 to 3'-monoiodothyronine (3'-T1) via inner-ring deiodination (IRD). Catalyzes the deiodination of 3-T1 to L-thyronine (T0) via outer-ring deiodination (ORD). Catalyzes the tyrosyl ring deiodinations of 3,3',5,5'-tetraiodothyronamine, 3,3',5'-triiodothyronamine, 3,5,3'-triiodothyronamine, 3,5-diiodothyronamine, 3,3'-diiodothyronamine and 3-iodothyronamine. In Sparus aurata (Gilthead sea bream), this protein is Thyroxine 5-deiodinase (dio3).